The chain runs to 418 residues: Putative heat shock protein HSP 90-alpha A4 (418 aa).

Residues Asp33, Lys52, Phe78, and Arg204 each contribute to the ATP site. Disordered regions lie at residues 255-289 (EDLELPEDEEEKKKQEEGKQKTKQKKNQSLRTSAK) and 383-418 (GLGTDEDDPTADDTSAAVTEEMPPLEGDDDTSRMEK). Positions 265–274 (EKKKQEEGKQ) are enriched in basic and acidic residues.

The protein belongs to the heat shock protein 90 family. In terms of assembly, homodimer.

It is found in the cytoplasm. Putative molecular chaperone that may promote the maturation, structural maintenance and proper regulation of specific target proteins. This chain is Putative heat shock protein HSP 90-alpha A4 (HSP90AA4P), found in Homo sapiens (Human).